The sequence spans 156 residues: Small ribosomal subunit protein uS7 (156 aa).

Belongs to the universal ribosomal protein uS7 family. As to quaternary structure, part of the 30S ribosomal subunit. Contacts proteins S9 and S11.

One of the primary rRNA binding proteins, it binds directly to 16S rRNA where it nucleates assembly of the head domain of the 30S subunit. Is located at the subunit interface close to the decoding center, probably blocks exit of the E-site tRNA. This Desulfitobacterium hafniense (strain DSM 10664 / DCB-2) protein is Small ribosomal subunit protein uS7.